The primary structure comprises 315 residues: Aldo-keto reductase family 4 member C11 (315 aa).

Alanine 2 is subject to N-acetylalanine. NADP(+)-binding positions include 23–24 (TW) and aspartate 47. The active-site Proton donor is the tyrosine 52. NADP(+) is bound by residues histidine 114, 158–159 (SN), glutamine 180, 207–213 (SPLGSPG), 256–258 (KST), and 262–266 (RIREN). Serine 295 is modified (phosphoserine).

It belongs to the aldo/keto reductase family.

Functionally, oxidoreductase that may act on a broad range of substrates such as ketosteroids, aldehydes, ketones and sugars. The protein is Aldo-keto reductase family 4 member C11 (AKR4C11) of Arabidopsis thaliana (Mouse-ear cress).